The chain runs to 600 residues: Leiomodin-1 (600 aa).

Phosphoserine is present on S12. 3 disordered regions span residues 38–61 (VVDPDGSVPVGLRQRNQTEKQSTG), 80–324 (MQRE…PLER), and 472–573 (DKQR…QEKN). Composition is skewed to basic and acidic residues over residues 80-127 (MQRE…EPKR), 134-240 (FSRD…EKMK), 247-256 (DMKKEDEKVK), 263-292 (DTKKDDEKVKKNEPLHEKEAKDDSKTKTPE), and 472-497 (DKQRQKRLQEQRQAQEAKGEKKDLLE). 2 positions are modified to phosphoserine: S85 and S135. A run of 8 repeats spans residues 165–180 (AAVDKKEAGKDGRGEE), 181–196 (RAVATKKEEEKKGSDR), 197–212 (NTGLSRDKDKKREEMK), 213–228 (EVAKKEDDEKVKGERR), 229–244 (NTDTRKEGEKMKRAGG), 245–260 (NTDMKKEDEKVKRGTG), 261–276 (NTDTKKDDEKVKKNEP), and 277–293 (LHEKEAKDDSKTKTPEK). An 8 X approximate tandem repeats region spans residues 165 to 293 (AAVDKKEAGK…DDSKTKTPEK (129 aa)). Residues 508–527 (SPKPSPQPSPKPSPKNSPKK) are 5 X 4 AA approximate tandem repeats. 2 stretches are compositionally biased toward pro residues: residues 510–522 (KPSPQPSPKPSPK) and 532–543 (AAPPPPPPPLAP). Phosphoserine is present on S555. The 20-residue stretch at 574 to 593 (SRDQLLAAIRSSNLKQLKKV) folds into the WH2 domain.

This sequence belongs to the tropomodulin family. Detected in lung vascular smooth muscle (at protein level). Detected in thyroid and extraocular smooth muscle, but not skeletal muscle. Detected in heart, aorta, skeletal muscle, colon, urinary bladder, uterus, stomach, and small intestine.

The protein localises to the cytoplasm. Its subcellular location is the myofibril. The protein resides in the sarcomere. It is found in the cytoskeleton. Required for proper contractility of visceral smooth muscle cells. Mediates nucleation of actin filaments. The protein is Leiomodin-1 (LMOD1) of Homo sapiens (Human).